The following is a 377-amino-acid chain: Testis-expressed protein 13A (377 aa).

A required for repression of transcription region spans residues Trp-92–Pro-377. The stretch at Gln-122–Arg-156 forms a coiled coil. The stretch at Glu-142–Ala-165 is one LRR repeat. The RanBP2-type zinc-finger motif lies at Arg-345–Gly-369. Positions 351, 354, 365, and 368 each coordinate Zn(2+).

It belongs to the TEX13 family. In terms of assembly, interacts with CNOT1; the interaction may inhibit CNOT1 binding to mRNA and subsequently CNOT1-mediated mRNA degradation.

Functionally, binds to ssRNA containing the consensus sequence 5'-AGGUAA-3'. Plays a role in transcriptional repression. Required for rapid sperm motility and timely degradation of mRNA via its interaction with CNOT1. This chain is Testis-expressed protein 13A, found in Mus musculus (Mouse).